We begin with the raw amino-acid sequence, 229 residues long: 2,3-bisphosphoglycerate-dependent phosphoglycerate mutase (229 aa).

Substrate-binding positions include 7 to 14 (RHGQSEWN), 20 to 21 (TG), Arg-59, 86 to 89 (ERHY), Lys-97, 113 to 114 (RR), and 182 to 183 (GN). The active-site Tele-phosphohistidine intermediate is the His-8. Glu-86 serves as the catalytic Proton donor/acceptor.

The protein belongs to the phosphoglycerate mutase family. BPG-dependent PGAM subfamily.

The catalysed reaction is (2R)-2-phosphoglycerate = (2R)-3-phosphoglycerate. It participates in carbohydrate degradation; glycolysis; pyruvate from D-glyceraldehyde 3-phosphate: step 3/5. Functionally, catalyzes the interconversion of 2-phosphoglycerate and 3-phosphoglycerate. In Listeria innocua serovar 6a (strain ATCC BAA-680 / CLIP 11262), this protein is 2,3-bisphosphoglycerate-dependent phosphoglycerate mutase.